The following is a 134-amino-acid chain: DNA polymerase III subunit psi (134 aa).

It belongs to the DNA polymerase III psi/HolD chain family. As to quaternary structure, DNA polymerase III contains a core (composed of alpha, epsilon and theta chains) that associates with a tau subunit. This core dimerizes to form the POLIII' complex. PolIII' associates with the gamma complex (composed of gamma, delta, delta', psi and chi chains) and with the beta chain to form the complete DNA polymerase III complex. Interacts directly with the chi subunit (holC).

The enzyme catalyses DNA(n) + a 2'-deoxyribonucleoside 5'-triphosphate = DNA(n+1) + diphosphate. In terms of biological role, part of the beta sliding clamp loading complex, which hydrolyzes ATP to load the beta clamp onto primed DNA to form the DNA replication pre-initiation complex. DNA polymerase III is a complex, multichain enzyme responsible for most of the replicative synthesis in bacteria. This DNA polymerase also exhibits 3' to 5' exonuclease activity. This chain is DNA polymerase III subunit psi (holD), found in Haemophilus influenzae (strain ATCC 51907 / DSM 11121 / KW20 / Rd).